A 255-amino-acid chain; its full sequence is 5-oxoprolinase subunit A 1 (255 aa).

It belongs to the LamB/PxpA family. In terms of assembly, forms a complex composed of PxpA, PxpB and PxpC.

The enzyme catalyses 5-oxo-L-proline + ATP + 2 H2O = L-glutamate + ADP + phosphate + H(+). In terms of biological role, catalyzes the cleavage of 5-oxoproline to form L-glutamate coupled to the hydrolysis of ATP to ADP and inorganic phosphate. This Agrobacterium fabrum (strain C58 / ATCC 33970) (Agrobacterium tumefaciens (strain C58)) protein is 5-oxoprolinase subunit A 1.